A 114-amino-acid chain; its full sequence is UPF0342 protein LCABL_19440 (114 aa).

The protein belongs to the UPF0342 family.

In Lacticaseibacillus casei (strain BL23) (Lactobacillus casei), this protein is UPF0342 protein LCABL_19440.